Consider the following 615-residue polypeptide: Sodium-coupled neutral amino acid transporter 9 homolog (615 aa).

Topologically, residues 1–165 (MPPFFAEFTE…LKDVSGKQGS (165 aa)) are cytoplasmic. The segment at 41-65 (VDDNDTDPLLDDEPPRRLPPAGGVP) is disordered. Residues 42 to 52 (DDNDTDPLLDD) are compositionally biased toward acidic residues. Residues 166-186 (IVTIFSIWNTMMGTSLLAMPW) form a helical membrane-spanning segment. Residues 175 to 180 (TMMGTS) are important for arginine binding and amino acid transport. The Lumenal portion of the chain corresponds to 187–192 (ALQQAG). The helical transmembrane segment at 193–213 (LVLGIIIMLSMAAICFYTAYI) threads the bilayer. Residues 214 to 246 (VIESPKRLQDLSVDPLLAEFSDVCKSLFGRIGE) are Cytoplasmic-facing. Residues 247–273 (YCAVVFSVCVLIGGVIVYWVLMSNFLY) form a helical membrane-spanning segment. Over 274–341 (YTGAVVYESM…TGDDSWSFDK (68 aa)) the chain is Lumenal. N-linked (GlcNAc...) asparagine glycosylation is found at Asn-286 and Asn-295. A disulfide bond links Cys-304 and Cys-478. The helical transmembrane segment at 342 to 358 (FWTLRGTVPIYLAFALF) threads the bilayer. Residues 359-367 (PLMNFKSPT) are Cytoplasmic-facing. Residues 368 to 392 (FFTKFNVLGTISVMYLLMFVFSKLL) form a helical membrane-spanning segment. The Lumenal portion of the chain corresponds to 393–413 (ECGVNMDFSNPKSIHYVQLAN). Residues 414-434 (MHFPALSGTLTLSYFIHNAVL) traverse the membrane as a helical segment. The Cytoplasmic portion of the chain corresponds to 435-451 (TILRNQKHPENNARDLS). The helical transmembrane segment at 452-472 (IGYCLVAFCYVFIGFTFFAAF) threads the bilayer. Residues 473–491 (PVQRSCISDNFLNNFGAGD) lie on the Lumenal side of the membrane. A helical transmembrane segment spans residues 492–512 (VLSSTARLFLLFQMITVLPLL). The Cytoplasmic segment spans residues 513 to 533 (MFLVRSQLFYAIFGQTWPGAI). A helical membrane pass occupies residues 534–554 (RVIILNVLLIAVAVGFATFYP). At 555-561 (NVGSILR) the chain is on the lumenal side. Residues 562–582 (YVGSISGLVYVFALPAMVYIK) traverse the membrane as a helical segment. Residues 583–594 (QSEAAGTLTPMK) are Cytoplasmic-facing. A helical membrane pass occupies residues 595 to 615 (KYAHYGIIVIGVANLIAQFVI).

This sequence belongs to the amino acid/polyamine transporter 2 family. SLC38A9 subfamily.

It is found in the lysosome membrane. Its subcellular location is the late endosome membrane. With respect to regulation, amino acid transport is sodium-dependent. Transport of leucine, tyrosine and phenylalanine is increased by arginine binding. In terms of biological role, lysosomal amino acid transporter involved in the activation of mTORC1 in response to amino acid levels. Probably acts as an amino acid sensor of the Rag GTPases and Ragulator complexes, 2 complexes involved in amino acid sensing and activation of mTORC1, a signaling complex promoting cell growth in response to growth factors, energy levels, and amino acids. The polypeptide is Sodium-coupled neutral amino acid transporter 9 homolog (Caenorhabditis elegans).